Consider the following 426-residue polypeptide: Histidine--tRNA ligase (426 aa).

Belongs to the class-II aminoacyl-tRNA synthetase family. In terms of assembly, homodimer.

The protein resides in the cytoplasm. It catalyses the reaction tRNA(His) + L-histidine + ATP = L-histidyl-tRNA(His) + AMP + diphosphate + H(+). The polypeptide is Histidine--tRNA ligase (Streptococcus agalactiae serotype III (strain NEM316)).